The sequence spans 272 residues: Shikimate dehydrogenase (NADP(+)) (272 aa).

Shikimate contacts are provided by residues 14–16 (SKS) and threonine 61. Lysine 65 functions as the Proton acceptor in the catalytic mechanism. Glutamate 77 lines the NADP(+) pocket. The shikimate site is built by asparagine 86 and aspartate 102. NADP(+) is bound by residues 126 to 130 (GAGGA), 149 to 154 (NRTASR), and methionine 213. Residue tyrosine 215 participates in shikimate binding. Glycine 237 serves as a coordination point for NADP(+).

This sequence belongs to the shikimate dehydrogenase family. As to quaternary structure, homodimer.

The catalysed reaction is shikimate + NADP(+) = 3-dehydroshikimate + NADPH + H(+). The protein operates within metabolic intermediate biosynthesis; chorismate biosynthesis; chorismate from D-erythrose 4-phosphate and phosphoenolpyruvate: step 4/7. In terms of biological role, involved in the biosynthesis of the chorismate, which leads to the biosynthesis of aromatic amino acids. Catalyzes the reversible NADPH linked reduction of 3-dehydroshikimate (DHSA) to yield shikimate (SA). The protein is Shikimate dehydrogenase (NADP(+)) of Salmonella typhimurium (strain LT2 / SGSC1412 / ATCC 700720).